We begin with the raw amino-acid sequence, 264 residues long: S-adenosylmethionine decarboxylase proenzyme (264 aa).

Ser112 serves as the catalytic Schiff-base intermediate with substrate; via pyruvic acid. At Ser112 the chain carries Pyruvic acid (Ser); by autocatalysis. His117 acts as the Proton acceptor; for processing activity in catalysis. The active-site Proton donor; for catalytic activity is Cys140.

It belongs to the prokaryotic AdoMetDC family. Type 2 subfamily. In terms of assembly, heterooctamer of four alpha and four beta chains arranged as a tetramer of alpha/beta heterodimers. The cofactor is pyruvate. Is synthesized initially as an inactive proenzyme. Formation of the active enzyme involves a self-maturation process in which the active site pyruvoyl group is generated from an internal serine residue via an autocatalytic post-translational modification. Two non-identical subunits are generated from the proenzyme in this reaction, and the pyruvate is formed at the N-terminus of the alpha chain, which is derived from the carboxyl end of the proenzyme. The post-translation cleavage follows an unusual pathway, termed non-hydrolytic serinolysis, in which the side chain hydroxyl group of the serine supplies its oxygen atom to form the C-terminus of the beta chain, while the remainder of the serine residue undergoes an oxidative deamination to produce ammonia and the pyruvoyl group blocking the N-terminus of the alpha chain.

It catalyses the reaction S-adenosyl-L-methionine + H(+) = S-adenosyl 3-(methylsulfanyl)propylamine + CO2. It functions in the pathway amine and polyamine biosynthesis; S-adenosylmethioninamine biosynthesis; S-adenosylmethioninamine from S-adenosyl-L-methionine: step 1/1. Catalyzes the decarboxylation of S-adenosylmethionine to S-adenosylmethioninamine (dcAdoMet), the propylamine donor required for the synthesis of the polyamines spermine and spermidine from the diamine putrescine. The chain is S-adenosylmethionine decarboxylase proenzyme from Yersinia pseudotuberculosis serotype O:1b (strain IP 31758).